The chain runs to 321 residues: Glucan 1,3-beta-glucosidase (321 aa).

An N-terminal signal peptide occupies residues 1–21; that stretch reads MQFLSSFVFAALALLPLSAMA. Asn-39 and Asn-99 each carry an N-linked (GlcNAc...) asparagine glycan. Glu-141 serves as the catalytic Proton donor. Residues Asn-210, Asn-213, and Asn-237 are each glycosylated (N-linked (GlcNAc...) asparagine). The Nucleophile role is filled by Glu-244. 2 N-linked (GlcNAc...) asparagine glycosylation sites follow: Asn-309 and Asn-317.

It belongs to the glycosyl hydrolase 17 family.

It is found in the secreted. Its subcellular location is the cell wall. The enzyme catalyses Successive hydrolysis of beta-D-glucose units from the non-reducing ends of (1-&gt;3)-beta-D-glucans, releasing alpha-glucose.. Glucanases possibly play a role in cell expansion during growth, in cell-cell fusion during mating, and in spore release during sporulation. This enzyme may be involved in beta-glucan degradation and also function biosynthetically as a transglycosylase. In Schizosaccharomyces pombe (strain 972 / ATCC 24843) (Fission yeast), this protein is Glucan 1,3-beta-glucosidase (bgl2).